The following is a 64-amino-acid chain: Large ribosomal subunit protein uL29 (64 aa).

The protein belongs to the universal ribosomal protein uL29 family.

This chain is Large ribosomal subunit protein uL29, found in Ligilactobacillus salivarius (strain UCC118) (Lactobacillus salivarius).